Here is a 329-residue protein sequence, read N- to C-terminus: Phosphate import ATP-binding protein PstB (329 aa).

In terms of domain architecture, ABC transporter spans 83 to 325 (FEIRNFNFWY…PKQKATNSYI (243 aa)). Residue 116–123 (GKSGCGKS) participates in ATP binding.

It belongs to the ABC transporter superfamily. Phosphate importer (TC 3.A.1.7) family. The complex is composed of two ATP-binding proteins (PstB), two transmembrane proteins (PstC and PstA) and a solute-binding protein (PstS).

Its subcellular location is the cell membrane. The enzyme catalyses phosphate(out) + ATP + H2O = ADP + 2 phosphate(in) + H(+). Its function is as follows. Part of the ABC transporter complex PstSACB involved in phosphate import. Responsible for energy coupling to the transport system. The chain is Phosphate import ATP-binding protein PstB from Mycoplasma genitalium (strain ATCC 33530 / DSM 19775 / NCTC 10195 / G37) (Mycoplasmoides genitalium).